Here is a 194-residue protein sequence, read N- to C-terminus: ATP-dependent Clp protease proteolytic subunit (194 aa).

The active-site Nucleophile is the Ser-98. The active site involves His-123.

This sequence belongs to the peptidase S14 family. As to quaternary structure, fourteen ClpP subunits assemble into 2 heptameric rings which stack back to back to give a disk-like structure with a central cavity, resembling the structure of eukaryotic proteasomes.

The protein localises to the cytoplasm. The enzyme catalyses Hydrolysis of proteins to small peptides in the presence of ATP and magnesium. alpha-casein is the usual test substrate. In the absence of ATP, only oligopeptides shorter than five residues are hydrolyzed (such as succinyl-Leu-Tyr-|-NHMec, and Leu-Tyr-Leu-|-Tyr-Trp, in which cleavage of the -Tyr-|-Leu- and -Tyr-|-Trp bonds also occurs).. Functionally, cleaves peptides in various proteins in a process that requires ATP hydrolysis. Has a chymotrypsin-like activity. Plays a major role in the degradation of misfolded proteins. This chain is ATP-dependent Clp protease proteolytic subunit, found in Aliarcobacter butzleri (strain RM4018) (Arcobacter butzleri).